The sequence spans 368 residues: Peptide chain release factor 2 (368 aa).

Glutamine 249 is modified (N5-methylglutamine).

The protein belongs to the prokaryotic/mitochondrial release factor family. In terms of processing, methylated by PrmC. Methylation increases the termination efficiency of RF2.

The protein localises to the cytoplasm. In terms of biological role, peptide chain release factor 2 directs the termination of translation in response to the peptide chain termination codons UGA and UAA. This chain is Peptide chain release factor 2, found in Rhodococcus jostii (strain RHA1).